We begin with the raw amino-acid sequence, 469 residues long: Sorting and assembly machinery component 50 homolog (469 aa).

Positions 1 to 20 (MGTVHARSLEPLPSSGPDFG) are disordered. Positions 45–125 (VVVQHVHFDG…LDVTFEVTEL (81 aa)) constitute a POTRA domain. An N6-methyllysine modification is found at Lys-255.

The protein belongs to the SAM50/omp85 family. Associates with the mitochondrial contact site and cristae organizing system (MICOS) complex, composed of at least MICOS10/MIC10, CHCHD3/MIC19, CHCHD6/MIC25, APOOL/MIC27, IMMT/MIC60, APOO/MIC23/MIC26 and QIL1/MIC13. This complex was also known under the names MINOS or MitOS complex. The MICOS complex associates with mitochondrial outer membrane proteins SAMM50, MTX1 and MTX2 (together described as components of the mitochondrial outer membrane sorting assembly machinery (SAM) complex) and DNAJC11, mitochondrial inner membrane protein TMEM11 and with HSPA9. The MICOS and SAM complexes together with DNAJC11 are part of a large protein complex spanning both membranes termed the mitochondrial intermembrane space bridging (MIB) complex. Interacts with CHCHD3/MIC19. Interacts with ARMC1. In terms of assembly, (Microbial infection) Interacts with parasite T.gondii RH strain MAF1b1; the interaction is probably indirect and results in the disruption of the MIB complex and the formation of SPOTs (structures positive for outer mitochondrial membrane (OMM)), a cellular response to OMM stress, which leads to the constitutive shedding of OMM vesicles.

Its subcellular location is the mitochondrion outer membrane. It is found in the cytoplasm. The protein resides in the mitochondrion. Functionally, plays a crucial role in the maintenance of the structure of mitochondrial cristae and the proper assembly of the mitochondrial respiratory chain complexes. Required for the assembly of TOMM40 into the TOM complex. The polypeptide is Sorting and assembly machinery component 50 homolog (SAMM50) (Homo sapiens (Human)).